Reading from the N-terminus, the 160-residue chain is Cyanate hydratase (160 aa).

Catalysis depends on residues Arg100, Glu103, and Ser126.

Belongs to the cyanase family.

It carries out the reaction cyanate + hydrogencarbonate + 3 H(+) = NH4(+) + 2 CO2. Catalyzes the reaction of cyanate with bicarbonate to produce ammonia and carbon dioxide. The polypeptide is Cyanate hydratase (Emericella nidulans (strain FGSC A4 / ATCC 38163 / CBS 112.46 / NRRL 194 / M139) (Aspergillus nidulans)).